A 201-amino-acid chain; its full sequence is Ribosome maturation factor RimP (201 aa).

The interval 180–201 (LRRGSAPAQDEEGEDEAPGAPL) is disordered. A compositionally biased stretch (acidic residues) spans 188–201 (QDEEGEDEAPGAPL).

The protein belongs to the RimP family.

The protein localises to the cytoplasm. Its function is as follows. Required for maturation of 30S ribosomal subunits. The sequence is that of Ribosome maturation factor RimP from Methylobacterium sp. (strain 4-46).